The chain runs to 442 residues: tRNA modification GTPase MnmE (442 aa).

(6S)-5-formyl-5,6,7,8-tetrahydrofolate contacts are provided by Arg23, Glu82, and Lys121. Residues 217-363 (PFKIAIIGET…LVDLLTKYIN (147 aa)) enclose the TrmE-type G domain. Position 227 (Asn227) interacts with K(+). GTP is bound by residues 227-232 (NVGKSS), 246-252 (SNIKGST), and 271-274 (DTAG). Ser231 contributes to the Mg(2+) binding site. Residues Ser246, Ile248, and Ser251 each coordinate K(+). Mg(2+) is bound at residue Thr252. Lys442 contacts (6S)-5-formyl-5,6,7,8-tetrahydrofolate.

Belongs to the TRAFAC class TrmE-Era-EngA-EngB-Septin-like GTPase superfamily. TrmE GTPase family. In terms of assembly, homodimer. Heterotetramer of two MnmE and two MnmG subunits. Requires K(+) as cofactor.

Its subcellular location is the cytoplasm. Exhibits a very high intrinsic GTPase hydrolysis rate. Involved in the addition of a carboxymethylaminomethyl (cmnm) group at the wobble position (U34) of certain tRNAs, forming tRNA-cmnm(5)s(2)U34. This chain is tRNA modification GTPase MnmE, found in Mycoplasma genitalium (strain ATCC 33530 / DSM 19775 / NCTC 10195 / G37) (Mycoplasmoides genitalium).